The chain runs to 513 residues: Sugar transport protein MST8 (513 aa).

Residues 1–17 are Cytoplasmic-facing; that stretch reads MAGGAMTDTDGAHKNYP. A helical transmembrane segment spans residues 18 to 38; it reads GKMTIFVFLACLVASSGGLIF. Residues 39-81 are Extracellular-facing; sequence GYDIGISGGVTSMDSFLIKFFPSVYAKEKEMVETNQYCKFDSE. The helical transmembrane segment at 82–102 threads the bilayer; sequence LLTLFTSSLYLAALIASLFAS. The Cytoplasmic portion of the chain corresponds to 103–116; it reads VITRKFGRRITMLG. The helical transmembrane segment at 117–137 threads the bilayer; it reads GGVIFLVGAILNGAAADVAML. The Extracellular portion of the chain corresponds to 138 to 139; sequence II. Residues 140-160 form a helical membrane-spanning segment; it reads GRILLGIGVGFSNQAVPLYLS. At 161 to 166 the chain is on the cytoplasmic side; that stretch reads EMAPAR. A helical transmembrane segment spans residues 167–187; that stretch reads MRGMLNISFQLMITVGILAAN. Residues 188–201 lie on the Extracellular side of the membrane; it reads LINYFTDKIAGGWG. The helical transmembrane segment at 202 to 222 threads the bilayer; that stretch reads WRVSLGLAAVPAVIMAGGSLF. Residues 223-294 are Cytoplasmic-facing; that stretch reads LPDTPNSLLS…LVMSVLIPTL (72 aa). Residues 295-315 form a helical membrane-spanning segment; sequence QQLTGINVVMFYAPVLFKTIG. At 316-320 the chain is on the extracellular side; the sequence is FGGTA. The chain crosses the membrane as a helical span at residues 321–341; the sequence is SLMSAVITGLVNMFATFVSIA. The Cytoplasmic portion of the chain corresponds to 342-347; that stretch reads TVDRLG. The helical transmembrane segment at 348–368 threads the bilayer; it reads RRKLLLQGGVQMIFAQFILGT. At 369–385 the chain is on the extracellular side; sequence LIAVKFGTAGVANISRG. A helical transmembrane segment spans residues 386 to 406; that stretch reads YAIVVVLCICVFVSAFAWSWG. Residues 407-425 lie on the Cytoplasmic side of the membrane; it reads PLGWLVPSEIFPLEIRSAA. The helical transmembrane segment at 426–446 threads the bilayer; it reads QSVVVVFNMAFTFIIAQIFLM. Residues 447–450 lie on the Extracellular side of the membrane; the sequence is MLCH. A helical membrane pass occupies residues 451–471; sequence LKFGLFYFFGAMELIMTGFVF. Topologically, residues 472 to 512 are cytoplasmic; the sequence is FFLPETKGIPIEEMDRIWGKHWYWRRFVGAGAGGKVEITST.

It belongs to the major facilitator superfamily. Sugar transporter (TC 2.A.1.1) family. In terms of tissue distribution, expressed specifically in anthers.

It is found in the membrane. Its function is as follows. Mediates active uptake of hexoses by sugar:proton symport. May play an important role in transporting monosaccharides during anther development. This chain is Sugar transport protein MST8, found in Oryza sativa subsp. japonica (Rice).